Here is a 1464-residue protein sequence, read N- to C-terminus: DNA polymerase III PolC-type (1464 aa).

One can recognise an Exonuclease domain in the interval 426-582 (YVVFDVETTG…YDAEATGRLL (157 aa)).

The protein belongs to the DNA polymerase type-C family. PolC subfamily.

Its subcellular location is the cytoplasm. The enzyme catalyses DNA(n) + a 2'-deoxyribonucleoside 5'-triphosphate = DNA(n+1) + diphosphate. In terms of biological role, required for replicative DNA synthesis. This DNA polymerase also exhibits 3' to 5' exonuclease activity. This chain is DNA polymerase III PolC-type, found in Streptococcus thermophilus (strain ATCC BAA-250 / LMG 18311).